We begin with the raw amino-acid sequence, 117 residues long: Immunoglobulin heavy variable 5-10-1 (117 aa).

Positions 1 to 19 are cleaved as a signal peptide; the sequence is MGSTAILALLLAVLQGVCA. Positions 20–44 are framework-1; sequence EVQLVQSGAEVKKPGESLRISCKGS. One can recognise an Ig-like domain in the interval 20 to 117; that stretch reads EVQLVQSGAE…SDTAMYYCAR (98 aa). A disulfide bridge links Cys-41 with Cys-115. Residues 45–52 are complementarity-determining-1; the sequence is GYSFTSYW. The tract at residues 53-69 is framework-2; it reads ISWVRQMPGKGLEWMGR. Positions 70–77 are complementarity-determining-2; that stretch reads IDPSDSYT. Residues 78-115 are framework-3; the sequence is NYSPSFQGHVTISADKSISTAYLQWSSLKASDTAMYYC. The segment at 116 to 117 is complementarity-determining-3; sequence AR.

As to quaternary structure, immunoglobulins are composed of two identical heavy chains and two identical light chains; disulfide-linked.

It is found in the secreted. Its subcellular location is the cell membrane. Functionally, v region of the variable domain of immunoglobulin heavy chains that participates in the antigen recognition. Immunoglobulins, also known as antibodies, are membrane-bound or secreted glycoproteins produced by B lymphocytes. In the recognition phase of humoral immunity, the membrane-bound immunoglobulins serve as receptors which, upon binding of a specific antigen, trigger the clonal expansion and differentiation of B lymphocytes into immunoglobulins-secreting plasma cells. Secreted immunoglobulins mediate the effector phase of humoral immunity, which results in the elimination of bound antigens. The antigen binding site is formed by the variable domain of one heavy chain, together with that of its associated light chain. Thus, each immunoglobulin has two antigen binding sites with remarkable affinity for a particular antigen. The variable domains are assembled by a process called V-(D)-J rearrangement and can then be subjected to somatic hypermutations which, after exposure to antigen and selection, allow affinity maturation for a particular antigen. This Homo sapiens (Human) protein is Immunoglobulin heavy variable 5-10-1.